Reading from the N-terminus, the 662-residue chain is Interferon-induced GTP-binding protein Mx1 (662 aa).

Met-1 carries the post-translational modification N-acetylmethionine; in Interferon-induced GTP-binding protein Mx1; alternate. The region spanning 67–340 is the Dynamin-type G domain; the sequence is DLALPAIAVI…LITHICKSLP (274 aa). The tract at residues 77–84 is G1 motif; that stretch reads GDQSSGKS. GTP is bound at residue 77 to 84; it reads GDQSSGKS. Positions 102 to 104 are G2 motif; it reads VTR. A G3 motif region spans residues 178 to 181; the sequence is DLPG. GTP is bound by residues 178–182 and 247–250; these read DLPGI and TKPD. Residues 247–250 are G4 motif; sequence TKPD. The interval 279 to 282 is G5 motif; it reads KCRG. The interval 341–366 is bundle signaling element (BSE); that stretch reads LLENQIKETHQRITEELQKYGVDIPE. The interval 366–533 is middle domain; that stretch reads EDENEKMFFL…HFQMEQIVYC (168 aa). Positions 367–632 are stalk; it reads DENEKMFFLI…KDTYSWLLKE (266 aa). The segment at 554–557 is critical for lipid-binding; it reads KKKK. The 89-residue stretch at 574–662 folds into the GED domain; the sequence is MEEIFQHLMA…ARRRLAQFPG (89 aa).

The protein belongs to the TRAFAC class dynamin-like GTPase superfamily. Dynamin/Fzo/YdjA family. As to quaternary structure, homotetramer. Oligomerizes into multimeric filamentous or ring-like structures by virtue of its stalk domain. Oligomerization is critical for GTPase activity, protein stability, and recognition of viral target structures. Interacts with TRPC1, TRPC3, TRPC4, TRPC5, TRPC6 and TRPC7. Interacts with HSPA5. Interacts with DDX39A and DDX39B. Interacts with TUBB/TUBB5. The GTP-bound form interacts (via C-terminus) with THOV P5 protein. The GTP-bound form interacts with LACV protein N. Interacts with CCHFV protein N. ISGylated.

The protein localises to the cytoplasm. It is found in the endoplasmic reticulum membrane. Its subcellular location is the perinuclear region. It localises to the nucleus. Functionally, interferon-induced dynamin-like GTPase with antiviral activity against a wide range of RNA viruses and some DNA viruses. Its target viruses include negative-stranded RNA viruses and HBV through binding and inactivation of their ribonucleocapsid. May also antagonize reoviridae and asfarviridae replication. Inhibits thogoto virus (THOV) replication by preventing the nuclear import of viral nucleocapsids. Inhibits La Crosse virus (LACV) replication by sequestering viral nucleoprotein in perinuclear complexes, preventing genome amplification, budding, and egress. Inhibits influenza A virus (IAV) replication by decreasing or delaying NP synthesis and by blocking endocytic traffic of incoming virus particles. Enhances ER stress-mediated cell death after influenza virus infection. May regulate the calcium channel activity of TRPCs. This chain is Interferon-induced GTP-binding protein Mx1 (MX1), found in Homo sapiens (Human).